The following is a 1031-amino-acid chain: Error-prone DNA polymerase (1031 aa).

Belongs to the DNA polymerase type-C family. DnaE2 subfamily.

It is found in the cytoplasm. The catalysed reaction is DNA(n) + a 2'-deoxyribonucleoside 5'-triphosphate = DNA(n+1) + diphosphate. DNA polymerase involved in damage-induced mutagenesis and translesion synthesis (TLS). It is not the major replicative DNA polymerase. The protein is Error-prone DNA polymerase of Pseudomonas aeruginosa (strain ATCC 15692 / DSM 22644 / CIP 104116 / JCM 14847 / LMG 12228 / 1C / PRS 101 / PAO1).